Consider the following 85-residue polypeptide: U4-theraphotoxin-Hhn1a (85 aa).

An N-terminal signal peptide occupies residues 1 to 22; that stretch reads MKVTLIAILTCAAVLVLRTTAA. Positions 23-48 are excised as a propeptide; that stretch reads EELEAESQLMEVGMPDTELAAVDEER. 3 disulfides stabilise this stretch: Cys52-Cys66, Cys56-Cys77, and Cys71-Cys82.

Belongs to the neurotoxin 12 (Hwtx-2) family. 02 (Hwtx-2) subfamily. As to quaternary structure, monomer. As to expression, expressed by the venom gland.

The protein resides in the secreted. Functionally, neurotoxin active on both insects and mammals. The chain is U4-theraphotoxin-Hhn1a from Cyriopagopus hainanus (Chinese bird spider).